We begin with the raw amino-acid sequence, 174 residues long: Repair DNA polymerase X (174 aa).

The segment at 42–51 (REEKMLNDVD) is involved in ssDNA binding. Positions 49 and 51 each coordinate Mg(2+). An intrachain disulfide couples Cys81 to Cys86. Mg(2+) is bound at residue Asp100.

Belongs to the DNA polymerase type-X family. The cofactor is Mg(2+).

Its subcellular location is the virion. The enzyme catalyses DNA(n) + a 2'-deoxyribonucleoside 5'-triphosphate = DNA(n+1) + diphosphate. Its function is as follows. Error-prone polymerase lacking a proofreading 3'-5' exonuclease which catalyzes the gap-filling reaction during the DNA repair process. Specifically binds intermediates in the single-nucleotide base-excision repair process. Also catalyzes DNA polymerization with low nucleotide-insertion fidelity. Probably acts as a strategic DNA mutase, which gives rise to a rapid emergence of variants. Generates mismatched G-G pairs, in that case, the polymerase first binds the deoxynucleotide followed by mismatch formation. Together with the viral DNA ligase, fills the single nucleotide gaps generated by the AP endonuclease. Binds DNA with high affinity via the helix alphaE. In African swine fever virus (isolate Tick/Malawi/Lil 20-1/1983) (ASFV), this protein is Repair DNA polymerase X.